A 415-amino-acid polypeptide reads, in one-letter code: Glycerate 2-kinase (415 aa).

A substrate-binding site is contributed by Lys-57.

The protein belongs to the glycerate kinase type-1 family. Homodimer. It depends on Mg(2+) as a cofactor. Requires Ni(2+) as cofactor. The cofactor is Mn(2+). Co(2+) is required as a cofactor.

It carries out the reaction (R)-glycerate + ATP = (2R)-2-phosphoglycerate + ADP + H(+). In terms of biological role, catalyzes the ATP-dependent phosphorylation of D-glycerate to 2-phosphoglycerate. It can also partially utilize GTP, CTP or UTP as phosphate donor. The sequence is that of Glycerate 2-kinase (gck) from Picrophilus torridus (strain ATCC 700027 / DSM 9790 / JCM 10055 / NBRC 100828 / KAW 2/3).